Reading from the N-terminus, the 151-residue chain is 6,7-dimethyl-8-ribityllumazine synthase (151 aa).

Residues phenylalanine 18, 49-51 (ALE), and 74-76 (CVI) contribute to the 5-amino-6-(D-ribitylamino)uracil site. A (2S)-2-hydroxy-3-oxobutyl phosphate-binding site is contributed by 79–80 (ET). Histidine 82 serves as the catalytic Proton donor. Residue asparagine 107 participates in 5-amino-6-(D-ribitylamino)uracil binding. Arginine 121 provides a ligand contact to (2S)-2-hydroxy-3-oxobutyl phosphate.

This sequence belongs to the DMRL synthase family.

It catalyses the reaction (2S)-2-hydroxy-3-oxobutyl phosphate + 5-amino-6-(D-ribitylamino)uracil = 6,7-dimethyl-8-(1-D-ribityl)lumazine + phosphate + 2 H2O + H(+). It participates in cofactor biosynthesis; riboflavin biosynthesis; riboflavin from 2-hydroxy-3-oxobutyl phosphate and 5-amino-6-(D-ribitylamino)uracil: step 1/2. Its function is as follows. Catalyzes the formation of 6,7-dimethyl-8-ribityllumazine by condensation of 5-amino-6-(D-ribitylamino)uracil with 3,4-dihydroxy-2-butanone 4-phosphate. This is the penultimate step in the biosynthesis of riboflavin. The chain is 6,7-dimethyl-8-ribityllumazine synthase from Bartonella tribocorum (strain CIP 105476 / IBS 506).